Here is a 334-residue protein sequence, read N- to C-terminus: Mevalonate kinase (334 aa).

Proline 110 to alanine 120 is an ATP binding site. The Proton acceptor role is filled by aspartate 161.

This sequence belongs to the GHMP kinase family. Mevalonate kinase subfamily. Homodimer. Mg(2+) is required as a cofactor.

The protein resides in the cytoplasm. The enzyme catalyses (R)-mevalonate + ATP = (R)-5-phosphomevalonate + ADP + H(+). The protein operates within isoprenoid biosynthesis; isopentenyl diphosphate biosynthesis via mevalonate pathway; isopentenyl diphosphate from (R)-mevalonate: step 1/3. Its function is as follows. Catalyzes the phosphorylation of (R)-mevalonate (MVA) to (R)-mevalonate 5-phosphate (MVAP). Functions in the mevalonate (MVA) pathway leading to isopentenyl diphosphate (IPP), a key precursor for the biosynthesis of isoprenoid compounds such as archaeal membrane lipids. The polypeptide is Mevalonate kinase (Thermococcus onnurineus (strain NA1)).